Reading from the N-terminus, the 504-residue chain is Maturase K (504 aa).

It belongs to the intron maturase 2 family. MatK subfamily.

It is found in the plastid. It localises to the chloroplast. In terms of biological role, usually encoded in the trnK tRNA gene intron. Probably assists in splicing its own and other chloroplast group II introns. This chain is Maturase K, found in Gossypium gossypioides (Mexican cotton).